A 711-amino-acid polypeptide reads, in one-letter code: Ribosomal RNA large subunit methyltransferase K/L (711 aa).

Positions 43 to 154 (TLYRTLLWSR…RENLVISLDL (112 aa)) constitute a THUMP domain.

This sequence belongs to the methyltransferase superfamily. RlmKL family.

It is found in the cytoplasm. The enzyme catalyses guanosine(2445) in 23S rRNA + S-adenosyl-L-methionine = N(2)-methylguanosine(2445) in 23S rRNA + S-adenosyl-L-homocysteine + H(+). The catalysed reaction is guanosine(2069) in 23S rRNA + S-adenosyl-L-methionine = N(2)-methylguanosine(2069) in 23S rRNA + S-adenosyl-L-homocysteine + H(+). In terms of biological role, specifically methylates the guanine in position 2445 (m2G2445) and the guanine in position 2069 (m7G2069) of 23S rRNA. In Haemophilus influenzae (strain 86-028NP), this protein is Ribosomal RNA large subunit methyltransferase K/L.